The sequence spans 212 residues: Small ribosomal subunit protein uS3 (212 aa).

The KH type-2 domain occupies 39 to 108; sequence IKNYIKERYK…EITISVVEVR (70 aa).

This sequence belongs to the universal ribosomal protein uS3 family. In terms of assembly, part of the 30S ribosomal subunit. Forms a tight complex with proteins S10 and S14.

Its function is as follows. Binds the lower part of the 30S subunit head. Binds mRNA in the 70S ribosome, positioning it for translation. This Aquifex aeolicus (strain VF5) protein is Small ribosomal subunit protein uS3.